Consider the following 511-residue polypeptide: GMP synthase [glutamine-hydrolyzing] (511 aa).

The 191-residue stretch at 3 to 193 folds into the Glutamine amidotransferase type-1 domain; that stretch reads KILILDFGGQ…VYSICDVAGD (191 aa). C80 acts as the Nucleophile in catalysis. Catalysis depends on residues H167 and E169. A GMPS ATP-PPase domain is found at 194–384; it reads WEPKNIKLEK…LDIPYQNVYR (191 aa). 221 to 227 is an ATP binding site; the sequence is SGGVDSL.

In terms of assembly, homodimer.

The enzyme catalyses XMP + L-glutamine + ATP + H2O = GMP + L-glutamate + AMP + diphosphate + 2 H(+). Its pathway is purine metabolism; GMP biosynthesis; GMP from XMP (L-Gln route): step 1/1. Catalyzes the synthesis of GMP from XMP. This Malacoplasma penetrans (strain HF-2) (Mycoplasma penetrans) protein is GMP synthase [glutamine-hydrolyzing].